The primary structure comprises 269 residues: 2-dehydro-3-deoxyphosphooctonate aldolase (269 aa).

Belongs to the KdsA family.

The protein localises to the cytoplasm. It carries out the reaction D-arabinose 5-phosphate + phosphoenolpyruvate + H2O = 3-deoxy-alpha-D-manno-2-octulosonate-8-phosphate + phosphate. It functions in the pathway carbohydrate biosynthesis; 3-deoxy-D-manno-octulosonate biosynthesis; 3-deoxy-D-manno-octulosonate from D-ribulose 5-phosphate: step 2/3. The protein operates within bacterial outer membrane biogenesis; lipopolysaccharide biosynthesis. The chain is 2-dehydro-3-deoxyphosphooctonate aldolase from Chlamydia trachomatis serovar L2 (strain ATCC VR-902B / DSM 19102 / 434/Bu).